The following is a 513-amino-acid chain: Histidine ammonia-lyase (513 aa).

Residues 142–144 (ASG) constitute a cross-link (5-imidazolinone (Ala-Gly)). Position 143 is a 2,3-didehydroalanine (Ser) (Ser-143).

The protein belongs to the PAL/histidase family. In terms of processing, contains an active site 4-methylidene-imidazol-5-one (MIO), which is formed autocatalytically by cyclization and dehydration of residues Ala-Ser-Gly.

It localises to the cytoplasm. It carries out the reaction L-histidine = trans-urocanate + NH4(+). It functions in the pathway amino-acid degradation; L-histidine degradation into L-glutamate; N-formimidoyl-L-glutamate from L-histidine: step 1/3. This Roseobacter denitrificans (strain ATCC 33942 / OCh 114) (Erythrobacter sp. (strain OCh 114)) protein is Histidine ammonia-lyase.